A 156-amino-acid polypeptide reads, in one-letter code: Small ribosomal subunit protein uS7c (156 aa).

It belongs to the universal ribosomal protein uS7 family. As to quaternary structure, part of the 30S ribosomal subunit.

Its subcellular location is the plastid. Functionally, one of the primary rRNA binding proteins, it binds directly to 16S rRNA where it nucleates assembly of the head domain of the 30S subunit. This chain is Small ribosomal subunit protein uS7c (rps7), found in Prototheca wickerhamii.